We begin with the raw amino-acid sequence, 375 residues long: MKDKSQIRVVVGMSGGVDSSVSAYLLKQQGYDVVGVFMKNWDDKNDSGVCTVTEDYQDVAKVASQIGIPYYSVNFEKEYWDRVFTYFLDEYKNGRTPNPDIMCNKEVKFKAFLDYAMSIDADYIAMGHYAQLRRDEDGRVHLLRGADDNKDQTYFLSQLSQEQLQKVMFPIGHLQKSEVRRIAEEAGLATAKKKDSTGICFIGERNFSKFLGEFLPAQPGEMVTLDGEVKGNHFGLMNYTIGQRKGLGIGGDGKSNEPWFVIGKDLKTNTLLVGQGYHNEHLYANSLDASKLSFVDDISDCGDEFHCTAKFRYRQKDTGVTVKFNEDRTKVEVIFDEPVRAITPGQEVVFYDGEECLGSGTIDHAYKESKLLQYV.

Residues 12-19 and Met38 contribute to the ATP site; that span reads GMSGGVDS. The segment at 98 to 100 is interaction with target base in tRNA; sequence NPD. Residue Cys103 is the Nucleophile of the active site. Cys103 and Cys200 are disulfide-bonded. Gly127 is a binding site for ATP. The interaction with tRNA stretch occupies residues 150 to 152; sequence KDQ. Cys200 acts as the Cysteine persulfide intermediate in catalysis. The segment at 312-313 is interaction with tRNA; sequence RY.

The protein belongs to the MnmA/TRMU family.

It is found in the cytoplasm. The enzyme catalyses S-sulfanyl-L-cysteinyl-[protein] + uridine(34) in tRNA + AH2 + ATP = 2-thiouridine(34) in tRNA + L-cysteinyl-[protein] + A + AMP + diphosphate + H(+). In terms of biological role, catalyzes the 2-thiolation of uridine at the wobble position (U34) of tRNA, leading to the formation of s(2)U34. The sequence is that of tRNA-specific 2-thiouridylase MnmA from Ligilactobacillus salivarius (strain UCC118) (Lactobacillus salivarius).